The sequence spans 128 residues: Cytochrome c-type biogenesis protein CcmE (128 aa).

Residues 1 to 8 (MQKRVRNR) are Cytoplasmic-facing. A helical; Signal-anchor for type II membrane protein transmembrane segment spans residues 9-29 (LITIIICFCSACLGISIILYN). The Periplasmic portion of the chain corresponds to 30-128 (LEKNIVFFLP…KHDENYRPPQ (99 aa)). Heme is bound by residues histidine 120 and tyrosine 124.

Belongs to the CcmE/CycJ family.

It is found in the cell inner membrane. Its function is as follows. Heme chaperone required for the biogenesis of c-type cytochromes. Transiently binds heme delivered by CcmC and transfers the heme to apo-cytochromes in a process facilitated by CcmF and CcmH. In Rickettsia conorii (strain ATCC VR-613 / Malish 7), this protein is Cytochrome c-type biogenesis protein CcmE.